A 174-amino-acid chain; its full sequence is Shikimate kinase 2 (174 aa).

An ATP-binding site is contributed by glycine 12 to threonine 17. Positions 16 and 32 each coordinate Mg(2+). Substrate is bound by residues aspartate 34, arginine 58, and glycine 79. Residues glutamine 112 to lysine 126 are LID domain. Residue arginine 120 coordinates ATP. Residue arginine 139 participates in substrate binding.

Belongs to the shikimate kinase family. AroL subfamily. Monomer. It depends on Mg(2+) as a cofactor.

The protein localises to the cytoplasm. The enzyme catalyses shikimate + ATP = 3-phosphoshikimate + ADP + H(+). The protein operates within metabolic intermediate biosynthesis; chorismate biosynthesis; chorismate from D-erythrose 4-phosphate and phosphoenolpyruvate: step 5/7. Its function is as follows. Catalyzes the specific phosphorylation of the 3-hydroxyl group of shikimic acid using ATP as a cosubstrate. This Escherichia coli O1:K1 / APEC protein is Shikimate kinase 2.